A 950-amino-acid polypeptide reads, in one-letter code: Leucine--tRNA ligase (950 aa).

Residues 66 to 77 (PYPSGAGLHVGH) carry the 'HIGH' region motif. The 'KMSKS' region signature appears at 721–725 (KIGKS). Lys-724 serves as a coordination point for ATP.

This sequence belongs to the class-I aminoacyl-tRNA synthetase family.

The protein localises to the cytoplasm. The catalysed reaction is tRNA(Leu) + L-leucine + ATP = L-leucyl-tRNA(Leu) + AMP + diphosphate. This chain is Leucine--tRNA ligase, found in Nocardia farcinica (strain IFM 10152).